The primary structure comprises 1349 residues: Patatin-like phospholipase domain-containing protein 7 (1349 aa).

The Lumenal portion of the chain corresponds to Met1–Leu36. A helical membrane pass occupies residues Met37–Val57. The Cytoplasmic segment spans residues Tyr58–Ser1349. Val170–Arg297 contributes to the a nucleoside 3',5'-cyclic phosphate binding site. The disordered stretch occupies residues Met340–Asp361. 2 positions are modified to phosphoserine: Ser341 and Ser377. A nucleoside 3',5'-cyclic phosphate contacts are provided by residues Phe496 to Arg599 and Ala610 to Lys715. Positions Val678–Arg964 are involved in the binding to lipid droplets. The 167-residue stretch at Leu947 to Arg1113 folds into the PNPLA domain. Positions Gly951–Gly956 match the GXGXXG motif. A GXSXG motif is present at residues Gly978 to Gly982. Ser980 functions as the Nucleophile in the catalytic mechanism. The active-site Proton acceptor is Asp1100. The short motif at Asp1100 to Gly1102 is the DGA/G element. Ser1277 carries the phosphoserine modification. Thr1281 carries the phosphothreonine modification. Residues Asp1297 to Ser1349 form a disordered region. Residues Ser1314–Ser1331 are compositionally biased toward polar residues.

This sequence belongs to the NTE family. In terms of tissue distribution, expressed in the brain, liver, kidney, lung and testis.

Its subcellular location is the endoplasmic reticulum membrane. The protein localises to the lipid droplet. The catalysed reaction is a 1-acyl-sn-glycero-3-phosphocholine + H2O = sn-glycerol 3-phosphocholine + a fatty acid + H(+). It catalyses the reaction 1-(9Z-octadecenoyl)-sn-glycero-3-phosphocholine + H2O = sn-glycerol 3-phosphocholine + (9Z)-octadecenoate + H(+). The enzyme catalyses 1-(9Z-octadecenoyl)-sn-glycero-3-phosphoethanolamine + H2O = sn-glycero-3-phosphoethanolamine + (9Z)-octadecenoate + H(+). It carries out the reaction 1-(9Z-octadecenoyl)-sn-glycero-3-phospho-L-serine + H2O = sn-glycero-3-phospho-L-serine + (9Z)-octadecenoate + H(+). The catalysed reaction is 1-hexadecanoyl-sn-glycero-3-phosphocholine + H2O = sn-glycerol 3-phosphocholine + hexadecanoate + H(+). It catalyses the reaction 1-hexadecanoyl-sn-glycero-3-phosphate + H2O = sn-glycerol 3-phosphate + hexadecanoate + H(+). Its function is as follows. Lysophospholipase which preferentially deacylates unsaturated lysophosphatidylcholine (C18:1), generating glycerophosphocholine. Also can deacylate, to a lesser extent, lysophosphatidylethanolamine (C18:1), lysophosphatidyl-L-serine (C18:1) and lysophosphatidic acid (C16:0). The protein is Patatin-like phospholipase domain-containing protein 7 (Pnpla7) of Rattus norvegicus (Rat).